Reading from the N-terminus, the 557-residue chain is E3 ubiquitin-protein ligase rnf168 (557 aa).

The segment at 16–55 (CPICQEILLEPVTLPCKHTLCNPCFQMTVEKASLCCPFCR) adopts an RING-type zinc-finger fold. The short motif at 112 to 130 (LCQPGEIRQEYEAEVSKIE) is the LR motif 1 element. The UMI motif motif lies at 145–153 (EDYIQKLLA). Short sequence motifs (MIU motif) lie at residues 170–193 (MEEQLKIDEELARTLSVDLDVSNA) and 422–445 (RRRQEEQDRLLALQLQRELDKELK). The short motif at 449–460 (RGKGSPDEYELR) is the LR motif 2 element. Residues 482–543 (PLRKEIPVQD…GINVLKPINK (62 aa)) form a disordered region. A compositionally biased stretch (polar residues) spans 490-500 (QDNSRNTQSEY). The segment covering 508-521 (PSRKNSVRSARVRQ) has biased composition (basic residues).

The protein belongs to the RNF168 family. As to quaternary structure, monomer.

The protein resides in the nucleus. The enzyme catalyses S-ubiquitinyl-[E2 ubiquitin-conjugating enzyme]-L-cysteine + [acceptor protein]-L-lysine = [E2 ubiquitin-conjugating enzyme]-L-cysteine + N(6)-ubiquitinyl-[acceptor protein]-L-lysine.. It functions in the pathway protein modification; protein ubiquitination. Its function is as follows. E3 ubiquitin-protein ligase required for accumulation of repair proteins to sites of DNA damage. Acts with ube2n/ubc13 to amplify the rnf8-dependent histone ubiquitination. Recruited to sites of DNA damage at double-strand breaks (DSBs) by binding to ubiquitinated histone H2A and ubiquitinates histone H2A and H2AX, leading to amplify the rnf8-dependent H2A ubiquitination and promoting the formation of 'Lys-63'-linked ubiquitin conjugates. This leads to concentrate ubiquitinated histones H2A and H2AX at DNA lesions to the threshold required for recruitment of tp53bp1 and brca1. Catalyzes monoubiquitination of 'Lys-13' and 'Lys-15' of nucleosomal histone H2A (H2AK13Ub and H2AK15Ub, respectively). The chain is E3 ubiquitin-protein ligase rnf168 from Xenopus laevis (African clawed frog).